Reading from the N-terminus, the 147-residue chain is Small ribosomal subunit protein uS12 (147 aa).

The protein belongs to the universal ribosomal protein uS12 family. In terms of assembly, part of the 30S ribosomal subunit.

Its function is as follows. With S4 and S5 plays an important role in translational accuracy. Located at the interface of the 30S and 50S subunits. The chain is Small ribosomal subunit protein uS12 from Methanococcus maripaludis (strain C7 / ATCC BAA-1331).